We begin with the raw amino-acid sequence, 151 residues long: UPF0178 protein YaiI (151 aa).

It belongs to the UPF0178 family.

The polypeptide is UPF0178 protein YaiI (Salmonella arizonae (strain ATCC BAA-731 / CDC346-86 / RSK2980)).